The primary structure comprises 253 residues: Carboxy-S-adenosyl-L-methionine synthase (253 aa).

S-adenosyl-L-methionine contacts are provided by residues Y49, 74-76 (GCS), 98-99 (DN), and N141.

Belongs to the class I-like SAM-binding methyltransferase superfamily. Cx-SAM synthase family.

It carries out the reaction prephenate + S-adenosyl-L-methionine = carboxy-S-adenosyl-L-methionine + 3-phenylpyruvate + H2O. In terms of biological role, catalyzes the conversion of S-adenosyl-L-methionine (SAM) to carboxy-S-adenosyl-L-methionine (Cx-SAM). The chain is Carboxy-S-adenosyl-L-methionine synthase from Trichodesmium erythraeum (strain IMS101).